Here is a 297-residue protein sequence, read N- to C-terminus: uncharacterized protein (297 aa).

Residues 1-60 form the HTH lysR-type domain; sequence MNIELRHLRYFVAVAEELHFGRAAARLNISQPPLSQQIQALEQQIGARLLARTNRSVLLT. Positions 20–40 form a DNA-binding region, H-T-H motif; sequence FGRAAARLNISQPPLSQQIQA.

It belongs to the LysR transcriptional regulatory family.

This is an uncharacterized protein from Escherichia coli (strain K12).